We begin with the raw amino-acid sequence, 47 residues long: Capistruin (47 aa).

Residues Met-1–His-28 constitute a propeptide that is removed on maturation. Positions Gly-29–Asp-37 form a cross-link, isoaspartyl glycine isopeptide (Gly-Asp).

In terms of processing, it is assumed that the two processing enzymes CapB/CapC convert the precursor protein CapA into the mature lasso peptide capistruin. CapB is assumed to cleave the precursor protein CapA and to set an N-terminal Gly free, whose a-NH2 group acts as the nucleophile in the subsequent cyclization reaction. CapC is most likely involved in the side-chain carboxyl group activation of aspartic acid at position 9 generating the electrophile for the condensation reaction. CapD may export capistruin outside of the producing cells.

The protein resides in the secreted. Functionally, peptide antibiotic that functions through inhibition of the bacterial DNA-dependent RNA polymerase (RNAP). Inhibits transcription by binding in RNAP secondary channel, where it sterically blocks the folding of the trigger loop, which is essential for efficient catalysis. In contrast to MccJ25, does not restrict access of nucleotide substrates to the catalytic center and shows a non-competitive mode of inhibition. Shows activity against closely related Gram-negative Burkholderia and Pseudomonas strains. Is not active against Gram-positive bacteria. This is Capistruin from Burkholderia thailandensis (strain ATCC 700388 / DSM 13276 / CCUG 48851 / CIP 106301 / E264).